The primary structure comprises 215 residues: 7-methyl-GTP pyrophosphatase (215 aa).

The active-site Proton acceptor is D79.

The protein belongs to the Maf family. YceF subfamily. A divalent metal cation serves as cofactor.

It localises to the cytoplasm. The enzyme catalyses N(7)-methyl-GTP + H2O = N(7)-methyl-GMP + diphosphate + H(+). In terms of biological role, nucleoside triphosphate pyrophosphatase that hydrolyzes 7-methyl-GTP (m(7)GTP). May have a dual role in cell division arrest and in preventing the incorporation of modified nucleotides into cellular nucleic acids. In Burkholderia mallei (strain ATCC 23344), this protein is 7-methyl-GTP pyrophosphatase.